A 146-amino-acid polypeptide reads, in one-letter code: Ribosome maturation factor RimP (146 aa).

It belongs to the RimP family.

It is found in the cytoplasm. Its function is as follows. Required for maturation of 30S ribosomal subunits. The chain is Ribosome maturation factor RimP from Helicobacter pylori (strain J99 / ATCC 700824) (Campylobacter pylori J99).